The primary structure comprises 739 residues: Nuclear pore complex protein NUP62 (739 aa).

Repeat copies occupy residues 6-7 (FG), 17-18 (FG), 50-51 (FG), 52-53 (FG), 68-69 (FG), 70-71 (FG), 78-79 (FG), 80-81 (FG), 91-92 (FG), 93-94 (FG), 108-109 (FG), 110-111 (FG), 124-125 (FG), 141-142 (FG), 159-160 (FG), 174-175 (FG), 186-187 (FG), 207-208 (FG), and 221-222 (FG). The interval 6–450 (FGQSNSVGGF…AATFSTTGFG (445 aa)) is 26 X 2 AA repeats of F-G. The disordered stretch occupies residues 18-67 (GSSSATNSSSASSTTSPLSFSFNQSSNPSSTGFGFGSSVSSTPASSTTPS). Residues 79–218 (GFGSSASSST…ASSSAATSTS (140 aa)) are compositionally biased toward low complexity. The segment at 79–245 (GFGSSASSST…VASSAPGSSS (167 aa)) is disordered. Residues 232–245 (PSFSVASSAPGSSS) are compositionally biased toward low complexity. Tandem repeats lie at residues 248–249 (FG), 271–272 (FG), 280–281 (FG), 308–309 (FG), and 366–367 (FG). Disordered regions lie at residues 281–329 (GSSS…ASPF), 341–366 (TASS…SFSF), and 399–418 (TTTS…SAPA). 2 consecutive repeat copies span residues 426–427 (FG) and 449–450 (FG). The disordered stretch occupies residues 471 to 533 (KTSTPASSSQ…AVAPVAGSPK (63 aa)). The segment covering 472 to 519 (TSTPASSSQPQTTSPAFSFSLPSSTSTTAPATSSATTTQTTLVVPSSS) has biased composition (low complexity). Residues 584–674 (RLEIEVAKVV…IRSIIQSVNA (91 aa)) are a coiled coil.

This sequence belongs to the nucleoporin NSP1/NUP62 family. Part of the nuclear pore complex (NPC). The NPC has an eight-fold symmetrical structure comprising a central transport channel and two rings, the cytoplasmic and nuclear rings, to which eight filaments are attached. The cytoplasmic filaments have loose ends, while the nuclear filaments are joined in a distal ring, forming a nuclear basket. NPCs are highly dynamic in configuration and composition, and can be devided in 3 subcomplexes, the NUP62 subcomplex, the NUP107-160 subcomplex and the NUP93 subcomplex, containing approximately 30 different nucleoporin proteins. Interacts with NUP58 and the importin KPNB1.

It localises to the nucleus envelope. The protein localises to the nucleus. Its subcellular location is the nuclear pore complex. This Arabidopsis thaliana (Mouse-ear cress) protein is Nuclear pore complex protein NUP62.